Consider the following 1775-residue polypeptide: ATP-dependent RNA helicase DEAH12, chloroplastic (1775 aa).

A chloroplast-targeting transit peptide spans 1–33; that stretch reads MRNSFPPSDGGRSATDRRQQSSHSSSTNRYNSR. The disordered stretch occupies residues 1-77; that stretch reads MRNSFPPSDG…NPSSGYSPPV (77 aa). Residues 21–34 show a composition bias toward low complexity; sequence SSHSSSTNRYNSRS. A compositionally biased stretch (polar residues) spans 35 to 60; it reads AQSSPPLNHRPTWNQQHSQYPNSNFP. The Helicase ATP-binding domain occupies 316–480; sequence LKKIHREQIM…FFSCGILLVN (165 aa). 329 to 336 contributes to the ATP binding site; that stretch reads GETGSGKS. A DEAH box motif is present at residues 427-430; the sequence is DEAH. A Helicase C-terminal domain is found at 510 to 676; sequence DVVKMAVEIH…VALLRMLALG (167 aa). A TRIAD supradomain region spans residues 1560–1767; that stretch reads IEVECPICLS…EPCYAHLRTI (208 aa). C1564, C1567, C1580, H1582, C1585, C1588, C1607, C1612, C1652, C1657, C1675, C1678, C1683, C1686, H1691, C1696, C1722, and C1725 together coordinate Zn(2+). Residues 1564–1612 form an RING-type 1 zinc finger; it reads CPICLSEVDDGYSLEGCSHLFCKACLLEQFEASMRNFDAFPILCSHIDC. The IBR-type zinc-finger motif lies at 1631 to 1696; that stretch reads DELFSASLSS…HLEYHPLITC (66 aa). The RING-type 2; atypical zinc finger occupies 1722 to 1750; sequence CPICKSTIEKTDGCNHMKCRCGKHICWTC. C1735 is a catalytic residue. 2 residues coordinate Zn(2+): C1740 and C1742.

This sequence belongs to the DEAD box helicase family. DEAH subfamily.

It localises to the plastid. The protein resides in the chloroplast. It carries out the reaction ATP + H2O = ADP + phosphate + H(+). The protein is ATP-dependent RNA helicase DEAH12, chloroplastic of Arabidopsis thaliana (Mouse-ear cress).